We begin with the raw amino-acid sequence, 208 residues long: FMN-dependent NADH:quinone oxidoreductase 1 (208 aa).

This sequence belongs to the azoreductase type 1 family. In terms of assembly, homodimer. FMN serves as cofactor.

It carries out the reaction 2 a quinone + NADH + H(+) = 2 a 1,4-benzosemiquinone + NAD(+). The enzyme catalyses N,N-dimethyl-1,4-phenylenediamine + anthranilate + 2 NAD(+) = 2-(4-dimethylaminophenyl)diazenylbenzoate + 2 NADH + 2 H(+). In terms of biological role, quinone reductase that provides resistance to thiol-specific stress caused by electrophilic quinones. Its function is as follows. Also exhibits azoreductase activity. Catalyzes the reductive cleavage of the azo bond in aromatic azo compounds to the corresponding amines. The protein is FMN-dependent NADH:quinone oxidoreductase 1 of Bacillus licheniformis (strain ATCC 14580 / DSM 13 / JCM 2505 / CCUG 7422 / NBRC 12200 / NCIMB 9375 / NCTC 10341 / NRRL NRS-1264 / Gibson 46).